A 108-amino-acid polypeptide reads, in one-letter code: Glutaredoxin (108 aa).

A Glutaredoxin domain is found at 3 to 103 (LAKAKEIVSG…PLLTEAGAIA (101 aa)). Cysteines 23 and 26 form a disulfide.

It belongs to the glutaredoxin family. CPYC subfamily.

It is found in the cytoplasm. Has a glutathione-disulfide oxidoreductase activity in the presence of NADPH and glutathione reductase. Reduces low molecular weight disulfides and proteins. In Solanum lycopersicum (Tomato), this protein is Glutaredoxin.